The primary structure comprises 142 residues: NSLHSAFSTYGEVLESKIILDRETQRSRGFGFVTFSTEEAMRSAIEGMNGKELDGRNITVNEAQSRGGRGGGGGGGYGGGRGGGGGYGRRDGGGGGYGGGGGGYGGGRGGYGGGGYGGGGGGYGGGSRGGGGYGNSDGNWRN.

One can recognise an RRM domain in the interval N1–S65. Residues M48 to G101 form a disordered region. The span at G67–G101 shows a compositional bias: gly residues.

Possibly has a role in RNA transcription or processing during stress. In Sorghum bicolor (Sorghum), this protein is Glycine-rich RNA-binding protein 1 (GRP1).